Consider the following 204-residue polypeptide: MTIHYPNGQQPVQHYNTHNELPTPHQSIYAKRGMSLEDEINHSNQYYLARHIAVIHKKPTPIQLVKVDYPKRSAAVIKEAYFRRPSTTDYNGVYRGYYIDFDAKETRNKNSFPLKNFHPHQIQHMRECVAQGGICFAFIKFTELDLLYLLPASNLFKYWDQQQNGGRKSILRTDIAKEGYQIHYQLNPRLPYLNAVDKIIAAKA.

The disordered stretch occupies residues 1–24; the sequence is MTIHYPNGQQPVQHYNTHNELPTP. A compositionally biased stretch (polar residues) spans 7-24; it reads NGQQPVQHYNTHNELPTP. Residues T87, D89, D102, and Q121 each contribute to the Mg(2+) site.

It belongs to the RecU family. Mg(2+) serves as cofactor.

The protein localises to the cytoplasm. It carries out the reaction Endonucleolytic cleavage at a junction such as a reciprocal single-stranded crossover between two homologous DNA duplexes (Holliday junction).. Its function is as follows. Endonuclease that resolves Holliday junction intermediates in genetic recombination. Cleaves mobile four-strand junctions by introducing symmetrical nicks in paired strands. Promotes annealing of linear ssDNA with homologous dsDNA. Required for DNA repair, homologous recombination and chromosome segregation. In Limosilactobacillus reuteri (strain DSM 20016) (Lactobacillus reuteri), this protein is Holliday junction resolvase RecU.